We begin with the raw amino-acid sequence, 524 residues long: Ankyrin repeat-containing protein At5g02620 (524 aa).

ANK repeat units lie at residues 16 to 45 (RDDT…GVEL), 55 to 84 (SGET…SVLA), 90 to 119 (NGFD…ELSF), 124 to 153 (SKTT…DLAA), 158 to 187 (NGKT…GMVT), 192 to 222 (KGQT…LINS), 226 to 255 (KGNT…VSRV), and 260 to 289 (SGET…QNAR). Helical transmembrane passes span 349–369 (AINS…AAIF), 399–419 (FLIF…VVVV), 441–461 (LMWM…FVVV), and 472–492 (VTAI…YWVI). A Phosphoserine modification is found at Ser-508.

It localises to the membrane. The protein is Ankyrin repeat-containing protein At5g02620 of Arabidopsis thaliana (Mouse-ear cress).